A 436-amino-acid chain; its full sequence is Hydrogenobyrinate a,c-diamide synthase (436 aa).

In terms of domain architecture, GATase cobBQ-type spans 244–435 (HIAVARDDAF…MHVIDFCGEK (192 aa)). Cys-327 functions as the Nucleophile in the catalytic mechanism.

It belongs to the CobB/CbiA family. Requires Mg(2+) as cofactor.

The catalysed reaction is hydrogenobyrinate + 2 L-glutamine + 2 ATP + 2 H2O = hydrogenobyrinate a,c-diamide + 2 L-glutamate + 2 ADP + 2 phosphate + 2 H(+). The protein operates within cofactor biosynthesis; adenosylcobalamin biosynthesis; cob(II)yrinate a,c-diamide from precorrin-2 (aerobic route): step 9/10. Catalyzes the ATP-dependent amidation of the two carboxylate groups at positions a and c of hydrogenobyrinate, using either L-glutamine or ammonia as the nitrogen source. In Brucella anthropi (strain ATCC 49188 / DSM 6882 / CCUG 24695 / JCM 21032 / LMG 3331 / NBRC 15819 / NCTC 12168 / Alc 37) (Ochrobactrum anthropi), this protein is Hydrogenobyrinate a,c-diamide synthase.